A 37-amino-acid chain; its full sequence is Large ribosomal subunit protein bL36B (37 aa).

Belongs to the bacterial ribosomal protein bL36 family.

The polypeptide is Large ribosomal subunit protein bL36B (Paenarthrobacter aurescens (strain TC1)).